A 160-amino-acid chain; its full sequence is Phosphopantetheine adenylyltransferase (160 aa).

Serine 9 serves as a coordination point for substrate. ATP-binding positions include 9 to 10 (SF) and histidine 17. Residues lysine 41, leucine 73, and arginine 87 each contribute to the substrate site. Residues 88–90 (GLR), glutamate 98, and 123–129 (YTFLSSS) each bind ATP.

This sequence belongs to the bacterial CoaD family. Homohexamer. Requires Mg(2+) as cofactor.

Its subcellular location is the cytoplasm. It carries out the reaction (R)-4'-phosphopantetheine + ATP + H(+) = 3'-dephospho-CoA + diphosphate. It functions in the pathway cofactor biosynthesis; coenzyme A biosynthesis; CoA from (R)-pantothenate: step 4/5. In terms of biological role, reversibly transfers an adenylyl group from ATP to 4'-phosphopantetheine, yielding dephospho-CoA (dPCoA) and pyrophosphate. The protein is Phosphopantetheine adenylyltransferase of Dictyoglomus turgidum (strain DSM 6724 / Z-1310).